Here is a 248-residue protein sequence, read N- to C-terminus: DNA repair protein RecO (248 aa).

It belongs to the RecO family.

Functionally, involved in DNA repair and RecF pathway recombination. This Streptomyces avermitilis (strain ATCC 31267 / DSM 46492 / JCM 5070 / NBRC 14893 / NCIMB 12804 / NRRL 8165 / MA-4680) protein is DNA repair protein RecO.